Reading from the N-terminus, the 833-residue chain is MLISKSKMFKTFWILTSIVLLASATVDISKLQEFEEYQKFTNESLLWAPYRSNCYFGMRPRYVHESPLIMGIMWFNSLSQDGLHSLRHFATPQDKLQKYGWEVYDPRIGGKEVFIDEKNNLNLTVYFVKSKNGENWSVRVQGEPLDPKRPSTASVVLYFSQNGGEIDGKSSLAMIGHDGPNDMKFFGYSKELGEYHLTVKDNFGHYFKNPEYETMEVAPGSDCSKTSHLSLQIPDKEVWKARDVFQSLVSDSIRDILEKEETKQRPADLIPSVLTIRNLYNFNPGNFHYIQKTFDLTKKDGFQFDITYNKLGTTQSISTREQVTELITWSLNEINARFDKQFSFGEGPDSIESVEVKRRFALETLSNLLGGIGYFYGNQLIDRETEFDESQFTEIKLLNAKEEGPFELFTSVPSRGFFPRGFYWDEGFHLLQIMEYDFDLAFEILASWFEMIEDDSGWIAREIILGNEARSKVPQEFQVQNPNIANPPTLLLAFSEMLSRAIENIGDFNSDSYHQVMFNSRTAKFMTNNLEANPGLLTEYAKKIYPKLLKHYNWFRKSQTGLIDEYEEILEDEGIWDKIHKNEVYRWVGRTFTHCLPSGMDDYPRAQPPDVAELNVDALAWVGVMTRSMKQIAHVLKLTQDEQRYAQIEQEVVENLDLLHWSENDNCYCDISIDPEDDEIREFVCHEGYVSVLPFALKLIPKNSPKLEKVVALMSDPEKIFSDYGLLSLSRQDDYFGKDENYWRGPIWMNINYLCLDAMRYYYPEVILDVAGEASNAKKLYQSLKINLSNNIYKVWEEQGYCYENYSPIDGHGTGAEHFTGWTALVVNILGRF.

Over methionine 1–lysine 10 the chain is Cytoplasmic. A helical; Signal-anchor for type II membrane protein transmembrane segment spans residues threonine 11 to isoleucine 28. Topologically, residues serine 29–phenylalanine 833 are lumenal. Substrate is bound by residues asparagine 42 and asparagine 122. Residues asparagine 42, asparagine 122, and asparagine 135 are each glycosylated (N-linked (GlcNAc...) asparagine). Glutamate 143 serves as a coordination point for substrate. Catalysis depends on aspartate 601, which acts as the Proton donor. A disulfide bond links cysteine 669 and cysteine 685. A glycan (N-linked (GlcNAc...) asparagine) is linked at asparagine 787. The active-site Proton acceptor is glutamate 804.

Belongs to the glycosyl hydrolase 63 family. N-glycosylated.

It is found in the endoplasmic reticulum membrane. It carries out the reaction N(4)-(alpha-D-Glc-(1-&gt;2)-alpha-D-Glc-(1-&gt;3)-alpha-D-Glc-(1-&gt;3)-alpha-D-Man-(1-&gt;2)-alpha-D-Man-(1-&gt;2)-alpha-D-Man-(1-&gt;3)-[alpha-D-Man-(1-&gt;2)-alpha-D-Man-(1-&gt;3)-[alpha-D-Man-(1-&gt;2)-alpha-D-Man-(1-&gt;6)]-alpha-D-Man-(1-&gt;6)]-beta-D-Man-(1-&gt;4)-beta-D-GlcNAc-(1-&gt;4)-beta-D-GlcNAc)-L-asparaginyl-[protein] + H2O = N(4)-(alpha-D-Glc-(1-&gt;3)-alpha-D-Glc-(1-&gt;3)-alpha-D-Man-(1-&gt;2)-alpha-D-Man-(1-&gt;2)-alpha-D-Man-(1-&gt;3)-[alpha-D-Man-(1-&gt;2)-alpha-D-Man-(1-&gt;3)-[alpha-D-Man-(1-&gt;2)-alpha-D-Man-(1-&gt;6)]-alpha-D-Man-(1-&gt;6)]-beta-D-Man-(1-&gt;4)-beta-D-GlcNAc-(1-&gt;4)-beta-D-GlcNAc)-L-asparaginyl-[protein] + beta-D-glucose. It functions in the pathway glycan metabolism; N-glycan degradation. Its activity is regulated as follows. Miglitol is an effective inhibitor at 1 mM. Cleaves the distal alpha 1,2-linked glucose residue from the Glc(3)Man(9)GlcNAc(2) oligosaccharide precursor highly specifically. Seems to play a role in beta-1,6-glucan synthesis. In Saccharomyces cerevisiae (strain ATCC 204508 / S288c) (Baker's yeast), this protein is Mannosyl-oligosaccharide glucosidase (CWH41).